We begin with the raw amino-acid sequence, 85 residues long: Small ribosomal subunit protein eS27 (85 aa).

The segment at 38–60 adopts a C4-type zinc-finger fold; the sequence is CHGCRTITTVFSHAQNVVICSSC.

It belongs to the eukaryotic ribosomal protein eS27 family. Zn(2+) is required as a cofactor.

The polypeptide is Small ribosomal subunit protein eS27 (rps27) (Dictyostelium discoideum (Social amoeba)).